The sequence spans 1115 residues: Phytochrome E (1115 aa).

Residues 213 to 383 form the GAF domain; sequence DIGTLCDTVV…AFSLQLYMEL (171 aa). Cysteine 318 serves as a coordination point for phytochromobilin. Residues 598-669 form the PAS 1 domain; the sequence is MALELVRLVE…ALMCRALQGE (72 aa). One can recognise a PAC domain in the interval 672-728; sequence RNVEVKLLKFGNHPTKEVVYLVVNACTSRDYKNDIIGVCFVGQDITPEKAVMDKFVR. The 72-residue stretch at 732 to 803 folds into the PAS 2 domain; that stretch reads DYEAIIQSLN…DALTKFMILL (72 aa). Residues 880–1100 form the Histidine kinase domain; the sequence is YIQQQMKNPL…YFLIDLDFKT (221 aa).

The protein belongs to the phytochrome family. As to quaternary structure, homodimer. Post-translationally, contains one covalently linked phytochromobilin chromophore.

Functionally, regulatory photoreceptor which exists in two forms that are reversibly interconvertible by light: the Pr form that absorbs maximally in the red region of the spectrum and the Pfr form that absorbs maximally in the far-red region. Photoconversion of Pr to Pfr induces an array of morphogenic responses, whereas reconversion of Pfr to Pr cancels the induction of those responses. Pfr controls the expression of a number of nuclear genes including those encoding the small subunit of ribulose-bisphosphate carboxylase, chlorophyll A/B binding protein, protochlorophyllide reductase, rRNA, etc. It also controls the expression of its own gene(s) in a negative feedback fashion. This is Phytochrome E (PHYE) from Ipomoea nil (Japanese morning glory).